A 611-amino-acid polypeptide reads, in one-letter code: Poly(3-hydroxyalkanoate) polymerase subunit PhaC (611 aa).

Cys-349 is an active-site residue.

The protein belongs to the PHA/PHB synthase family. Type I PhaC subfamily. Monomer.

The protein localises to the cytoplasm. It catalyses the reaction (3R)-3-hydroxybutanoyl-CoA + [(3R)-hydroxybutanoate](n) = [(3R)-hydroxybutanoate](n+1) + CoA. Its pathway is biopolymer metabolism; poly-(R)-3-hydroxybutanoate biosynthesis. Polymerizes D(-)-3-hydroxybutyryl-CoA to create PHB which consists of thousands of hydroxybutyrate molecules linked end to end. PHB serves as an intracellular energy reserve material when cells grow under conditions of nutrient limitation. The polypeptide is Poly(3-hydroxyalkanoate) polymerase subunit PhaC (Rhizobium meliloti (strain 1021) (Ensifer meliloti)).